Here is a 126-residue protein sequence, read N- to C-terminus: FCS-Like Zinc finger 17 (126 aa).

An FLZ-type zinc finger spans residues 41 to 85; sequence CFLKTCHLCNKQLHQDKDVYMYRGDLGFCSRECRESQMLIDDRKE.

Belongs to the FLZ family. Interacts with KIN10 and KIN11 via its FLZ-type zinc finger domain. Forms heterodimer with FLZ2 in vitro.

Its subcellular location is the nucleus. It is found in the cytoplasm. May act as an adapter to facilitate the interaction of SnRK1 complex with effector proteins, conferring tissue- and stimulus-type specific differences in the SnRK1 regulation pathway. The polypeptide is FCS-Like Zinc finger 17 (Arabidopsis thaliana (Mouse-ear cress)).